Consider the following 172-residue polypeptide: Shikimate kinase (172 aa).

8–15 (GARASGKT) is a binding site for ATP.

The protein belongs to the shikimate kinase family.

It is found in the cytoplasm. The enzyme catalyses shikimate + ATP = 3-phosphoshikimate + ADP + H(+). The protein operates within metabolic intermediate biosynthesis; chorismate biosynthesis; chorismate from D-erythrose 4-phosphate and phosphoenolpyruvate: step 5/7. The sequence is that of Shikimate kinase from Oleidesulfovibrio alaskensis (strain ATCC BAA-1058 / DSM 17464 / G20) (Desulfovibrio alaskensis).